Consider the following 507-residue polypeptide: Alkyl hydroperoxide reductase subunit F (507 aa).

207–222 lines the FAD pocket; sequence DVLIVGGGPASGSAAI. The cysteines at positions 335 and 338 are disulfide-linked. 347 to 361 provides a ligand contact to NAD(+); the sequence is DVAVIGGGNSGVEAA. An FAD-binding site is contributed by 467–477; it reads TNVPGIFAAGD.

Belongs to the class-II pyridine nucleotide-disulfide oxidoreductase family. Homodimer. Requires FAD as cofactor.

Functionally, serves to protect the cell against DNA damage by alkyl hydroperoxides. It can use either NADH or NADPH as electron donor for direct reduction of redox dyes or of alkyl hydroperoxides when combined with the AhpC protein. This Staphylococcus aureus (strain NCTC 8325 / PS 47) protein is Alkyl hydroperoxide reductase subunit F (ahpF).